The primary structure comprises 61 residues: Small ribosomal subunit protein bS21 (61 aa).

Residues Lys34–Lys61 form a disordered region. Residues Val43–Lys61 show a composition bias toward basic residues.

Belongs to the bacterial ribosomal protein bS21 family.

The protein is Small ribosomal subunit protein bS21 of Thermoanaerobacter pseudethanolicus (strain ATCC 33223 / 39E) (Clostridium thermohydrosulfuricum).